The primary structure comprises 50 residues: Large ribosomal subunit protein bL33B (50 aa).

The protein belongs to the bacterial ribosomal protein bL33 family.

This is Large ribosomal subunit protein bL33B from Mesomycoplasma hyopneumoniae (strain 7448) (Mycoplasma hyopneumoniae).